The primary structure comprises 398 residues: Succinate--CoA ligase [ADP-forming] subunit beta (398 aa).

An ATP-grasp domain is found at 9–237 (RDLFETHGVP…AGGLDILELK (229 aa)). Residues lysine 45, 52-54 (GRG), alanine 94, and glutamate 99 each bind ATP. 2 residues coordinate Mg(2+): asparagine 191 and aspartate 205. Residues asparagine 257 and 319 to 321 (GIT) contribute to the substrate site.

It belongs to the succinate/malate CoA ligase beta subunit family. In terms of assembly, heterotetramer of two alpha and two beta subunits. Mg(2+) serves as cofactor.

The catalysed reaction is succinate + ATP + CoA = succinyl-CoA + ADP + phosphate. The enzyme catalyses GTP + succinate + CoA = succinyl-CoA + GDP + phosphate. It participates in carbohydrate metabolism; tricarboxylic acid cycle; succinate from succinyl-CoA (ligase route): step 1/1. Succinyl-CoA synthetase functions in the citric acid cycle (TCA), coupling the hydrolysis of succinyl-CoA to the synthesis of either ATP or GTP and thus represents the only step of substrate-level phosphorylation in the TCA. The beta subunit provides nucleotide specificity of the enzyme and binds the substrate succinate, while the binding sites for coenzyme A and phosphate are found in the alpha subunit. This Corynebacterium glutamicum (strain ATCC 13032 / DSM 20300 / JCM 1318 / BCRC 11384 / CCUG 27702 / LMG 3730 / NBRC 12168 / NCIMB 10025 / NRRL B-2784 / 534) protein is Succinate--CoA ligase [ADP-forming] subunit beta.